A 357-amino-acid chain; its full sequence is N-acetyl-gamma-glutamyl-phosphate reductase (357 aa).

Residue Cys-160 is part of the active site.

It belongs to the NAGSA dehydrogenase family. Type 1 subfamily.

The protein resides in the cytoplasm. The catalysed reaction is N-acetyl-L-glutamate 5-semialdehyde + phosphate + NADP(+) = N-acetyl-L-glutamyl 5-phosphate + NADPH + H(+). The protein operates within amino-acid biosynthesis; L-arginine biosynthesis; N(2)-acetyl-L-ornithine from L-glutamate: step 3/4. Functionally, catalyzes the NADPH-dependent reduction of N-acetyl-5-glutamyl phosphate to yield N-acetyl-L-glutamate 5-semialdehyde. The chain is N-acetyl-gamma-glutamyl-phosphate reductase from Parasynechococcus marenigrum (strain WH8102).